Reading from the N-terminus, the 151-residue chain is Ribosome maturation factor RimP (151 aa).

Belongs to the RimP family.

The protein localises to the cytoplasm. Functionally, required for maturation of 30S ribosomal subunits. The protein is Ribosome maturation factor RimP of Alcanivorax borkumensis (strain ATCC 700651 / DSM 11573 / NCIMB 13689 / SK2).